The following is a 979-amino-acid chain: Pro-apoptotic serine protease NMA111 (979 aa).

Residues 1-20 (MKRNGESHLNGEAKKSRTEQ) are compositionally biased toward basic and acidic residues. The tract at residues 1–43 (MKRNGESHLNGEAKKSRTEQNQEQQDYQDEYYSSSDEELLPSS) is disordered. The segment covering 21–34 (NQEQQDYQDEYYSS) has biased composition (low complexity). The interval 65-260 (KVVNSVVSIQ…LPVSRPKRAL (196 aa)) is serine protease. Active-site charge relay system residues include His-108, Asp-139, and Ser-222. PDZ domains are found at residues 277 to 362 (EWQL…FVFQ) and 871 to 943 (PHYG…VSFD).

Belongs to the peptidase S1C family.

The protein resides in the nucleus. Its function is as follows. Nuclear serine protease which mediates apoptosis. In Lodderomyces elongisporus (strain ATCC 11503 / CBS 2605 / JCM 1781 / NBRC 1676 / NRRL YB-4239) (Yeast), this protein is Pro-apoptotic serine protease NMA111 (NMA111).